A 217-amino-acid chain; its full sequence is Large ribosomal subunit protein uL1 (217 aa).

Belongs to the universal ribosomal protein uL1 family. As to quaternary structure, part of the 50S ribosomal subunit.

Its function is as follows. Binds directly to 23S rRNA. The L1 stalk is quite mobile in the ribosome, and is involved in E site tRNA release. Protein L1 is also a translational repressor protein, it controls the translation of the L11 operon by binding to its mRNA. This Anaplasma marginale (strain St. Maries) protein is Large ribosomal subunit protein uL1.